A 402-amino-acid polypeptide reads, in one-letter code: MEWLAGGVTAPAGFVAAGACADIKGNGAGKKDVALLASRVPCAAAGVYTTNLVKAAPVVLTRGRTETGELQAVVANSGNANACTGEQGMRDAAEMARLAAEALGIRPELMGVASTGVIGVPLPMDRVSAGIRAAAAALSPEGGADAAEAIMTTDTFPKQAAARLEIGGATVTIGAMAKGSGMIHPNMATMLGFVTTDAAVDAAALREALREATDRSFNMITVDGDTSTNDMVLVLANGLAGNPRIMPGSAHYRAFADALAAVLIHLAKEIARDGEGATKLIEVRVKGAATLSDARKAARAVCGSNLVKAAVFGEDANWGRVLAALGYSGAQFDPGRVDLWLGDLQMMRAGEPVAFDEAAAARVLREKEVVFTADLHAGECEATAWGCDLTYDYVKINGSYRT.

Positions 152, 178, 189, 275, 397, and 402 each coordinate substrate. The active-site Nucleophile is the Thr-189.

The protein belongs to the ArgJ family. In terms of assembly, heterotetramer of two alpha and two beta chains.

It localises to the cytoplasm. It catalyses the reaction N(2)-acetyl-L-ornithine + L-glutamate = N-acetyl-L-glutamate + L-ornithine. It carries out the reaction L-glutamate + acetyl-CoA = N-acetyl-L-glutamate + CoA + H(+). The protein operates within amino-acid biosynthesis; L-arginine biosynthesis; L-ornithine and N-acetyl-L-glutamate from L-glutamate and N(2)-acetyl-L-ornithine (cyclic): step 1/1. It participates in amino-acid biosynthesis; L-arginine biosynthesis; N(2)-acetyl-L-ornithine from L-glutamate: step 1/4. Its function is as follows. Catalyzes two activities which are involved in the cyclic version of arginine biosynthesis: the synthesis of N-acetylglutamate from glutamate and acetyl-CoA as the acetyl donor, and of ornithine by transacetylation between N(2)-acetylornithine and glutamate. This chain is Arginine biosynthesis bifunctional protein ArgJ, found in Symbiobacterium thermophilum (strain DSM 24528 / JCM 14929 / IAM 14863 / T).